A 301-amino-acid chain; its full sequence is Sulfate adenylyltransferase subunit 2 (301 aa).

This sequence belongs to the PAPS reductase family. CysD subfamily. In terms of assembly, heterodimer composed of CysD, the smaller subunit, and CysN.

It catalyses the reaction sulfate + ATP + H(+) = adenosine 5'-phosphosulfate + diphosphate. Its pathway is sulfur metabolism; hydrogen sulfide biosynthesis; sulfite from sulfate: step 1/3. In terms of biological role, with CysN forms the ATP sulfurylase (ATPS) that catalyzes the adenylation of sulfate producing adenosine 5'-phosphosulfate (APS) and diphosphate, the first enzymatic step in sulfur assimilation pathway. APS synthesis involves the formation of a high-energy phosphoric-sulfuric acid anhydride bond driven by GTP hydrolysis by CysN coupled to ATP hydrolysis by CysD. In Shewanella woodyi (strain ATCC 51908 / MS32), this protein is Sulfate adenylyltransferase subunit 2.